The primary structure comprises 291 residues: Nitrogenase iron protein 1 (291 aa).

Residue Gly-10 to Ser-17 coordinates ATP. Cys-98 lines the [4Fe-4S] cluster pocket. Arg-101 is subject to ADP-ribosylarginine; by dinitrogenase reductase ADP-ribosyltransferase. Cys-133 lines the [4Fe-4S] cluster pocket.

Belongs to the NifH/BchL/ChlL family. Homodimer. The cofactor is [4Fe-4S] cluster. The reversible ADP-ribosylation of Arg-101 inactivates the nitrogenase reductase and regulates nitrogenase activity.

It catalyses the reaction N2 + 8 reduced [2Fe-2S]-[ferredoxin] + 16 ATP + 16 H2O = H2 + 8 oxidized [2Fe-2S]-[ferredoxin] + 2 NH4(+) + 16 ADP + 16 phosphate + 6 H(+). Its function is as follows. The key enzymatic reactions in nitrogen fixation are catalyzed by the nitrogenase complex, which has 2 components: the iron protein (component 2) and a component 1 which is either a molybdenum-iron protein, a vanadium-iron, or an iron-iron protein. The chain is Nitrogenase iron protein 1 (nifH1) from Azotobacter chroococcum mcd 1.